The sequence spans 1147 residues: Nucleolar protein 6 (1147 aa).

The tract at residues 1–49 (MQKKRSRAGAAEQEAASDDGEMSDSSDKMEVSQNKGKSGIKRAPEADDV) is disordered. Residues 15-24 (AASDDGEMSD) are compositionally biased toward acidic residues.

Belongs to the NRAP family. In terms of assembly, part of the small subunit (SSU) processome, composed of more than 70 proteins and the RNA chaperone small nucleolar RNA (snoRNA) U3.

Its subcellular location is the nucleus. The protein resides in the nucleolus. The protein localises to the chromosome. In terms of biological role, part of the small subunit (SSU) processome, first precursor of the small eukaryotic ribosomal subunit. During the assembly of the SSU processome in the nucleolus, many ribosome biogenesis factors, an RNA chaperone and ribosomal proteins associate with the nascent pre-rRNA and work in concert to generate RNA folding, modifications, rearrangements and cleavage as well as targeted degradation of pre-ribosomal RNA by the RNA exosome. The chain is Nucleolar protein 6 (nol6) from Xenopus laevis (African clawed frog).